A 1901-amino-acid polypeptide reads, in one-letter code: Protein TIC 214 (1901 aa).

6 helical membrane-spanning segments follow: residues 18 to 38, 64 to 84, 87 to 107, 124 to 144, 172 to 192, and 221 to 241; these read IINS…FSIG, FITG…HLAL, PHTI…WNNH, LSIQ…HFIL, VGWL…LVWI, and IFSI…PSPI. Disordered stretches follow at residues 248-299, 797-817, and 1591-1618; these read EASK…EERW, REEQ…ENKR, and IQEA…LGPV. Over residues 256-268 the composition is skewed to acidic residues; the sequence is VESEEERDVEIET. The segment covering 1591-1611 has biased composition (basic and acidic residues); the sequence is IQEAKEPASQGEKERGSDIEN.

Belongs to the TIC214 family. In terms of assembly, part of the Tic complex.

It is found in the plastid. Its subcellular location is the chloroplast inner membrane. Its function is as follows. Involved in protein precursor import into chloroplasts. May be part of an intermediate translocation complex acting as a protein-conducting channel at the inner envelope. The chain is Protein TIC 214 from Nicotiana sylvestris (Wood tobacco).